Reading from the N-terminus, the 316-residue chain is MNVQIGIDLMGGDHSPLVIWEVLIDVLNSRASNSHISFIAFASREVKEQILSSYTHKEYPEIIASESFVAMDDSPLAAIRKKSSSMALGLDYLKEDKIDAFISTGNTAALITLSRAKIPVFPTVRRPALLVRVPTMRGCAVILDVGANVSVNPEEMLGFARMGLAYRQCLGKAECPTIGLLNIGSEERKGTEAHRQTYRILKETFQDAFLGNIESGDVFGGSVDIVVADGFTGNIFLKTAEGVFDFLRHILGDKLESDVTRHLDYTIYPGSMVCGLSKLVIKCHGKACGKSLFNGISGSIDLARARVCERILSSLS.

It belongs to the PlsX family. In terms of assembly, homodimer. Probably interacts with PlsY.

The protein localises to the cytoplasm. It catalyses the reaction a fatty acyl-[ACP] + phosphate = an acyl phosphate + holo-[ACP]. It functions in the pathway lipid metabolism; phospholipid metabolism. In terms of biological role, catalyzes the reversible formation of acyl-phosphate (acyl-PO(4)) from acyl-[acyl-carrier-protein] (acyl-ACP). This enzyme utilizes acyl-ACP as fatty acyl donor, but not acyl-CoA. In Chlamydia caviae (strain ATCC VR-813 / DSM 19441 / 03DC25 / GPIC) (Chlamydophila caviae), this protein is Phosphate acyltransferase.